Consider the following 425-residue polypeptide: Serine--tRNA ligase (425 aa).

Residue 231–233 participates in L-serine binding; the sequence is TAE. 262–264 is an ATP binding site; the sequence is RSE. Glu285 provides a ligand contact to L-serine. 349-352 provides a ligand contact to ATP; it reads EISS. Residue Ser385 participates in L-serine binding.

Belongs to the class-II aminoacyl-tRNA synthetase family. Type-1 seryl-tRNA synthetase subfamily. In terms of assembly, homodimer. The tRNA molecule binds across the dimer.

It is found in the cytoplasm. The catalysed reaction is tRNA(Ser) + L-serine + ATP = L-seryl-tRNA(Ser) + AMP + diphosphate + H(+). The enzyme catalyses tRNA(Sec) + L-serine + ATP = L-seryl-tRNA(Sec) + AMP + diphosphate + H(+). It participates in aminoacyl-tRNA biosynthesis; selenocysteinyl-tRNA(Sec) biosynthesis; L-seryl-tRNA(Sec) from L-serine and tRNA(Sec): step 1/1. Catalyzes the attachment of serine to tRNA(Ser). Is also able to aminoacylate tRNA(Sec) with serine, to form the misacylated tRNA L-seryl-tRNA(Sec), which will be further converted into selenocysteinyl-tRNA(Sec). This chain is Serine--tRNA ligase, found in Bartonella bacilliformis (strain ATCC 35685 / KC583 / Herrer 020/F12,63).